We begin with the raw amino-acid sequence, 331 residues long: uncharacterized protein (331 aa).

This is an uncharacterized protein from Orgyia pseudotsugata (Douglas-fir tussock moth).